A 99-amino-acid chain; its full sequence is DNA-binding protein Fis (99 aa).

A DNA-binding region (H-T-H motif) is located at residues 75–94; sequence QTRAALMLGVNRGTLRKKLK.

Belongs to the transcriptional regulatory Fis family. In terms of assembly, homodimer.

In terms of biological role, activates ribosomal RNA transcription. Plays a direct role in upstream activation of rRNA promoters. The protein is DNA-binding protein Fis of Actinobacillus succinogenes (strain ATCC 55618 / DSM 22257 / CCUG 43843 / 130Z).